A 151-amino-acid chain; its full sequence is Large ribosomal subunit protein eL8 (151 aa).

It belongs to the eukaryotic ribosomal protein eL8 family. Part of the 50S ribosomal subunit. Probably part of the RNase P complex.

The protein resides in the cytoplasm. Multifunctional RNA-binding protein that recognizes the K-turn motif in ribosomal RNA, the RNA component of RNase P, box H/ACA, box C/D and box C'/D' sRNAs. This chain is Large ribosomal subunit protein eL8, found in Pyrobaculum neutrophilum (strain DSM 2338 / JCM 9278 / NBRC 100436 / V24Sta) (Thermoproteus neutrophilus).